The sequence spans 344 residues: MNTLLQTIADGDPLSRPEAEEAMATMMSGSARDEHIAALLMGLRTRGETLDELVGFTKTMREFAVSVETDDPQTIDLCGTGGDGASTFNISTTASFIAAGAGATVAKHGNRSVSSQSGSADVLEALGVQIDLEKEGVEHCLHEAGIAFLFAPFFHPAMRHVMPVRKALGVRTFFNILGPLCNPAGVTRQIVGAFDTSTAQTMVRILAELDADHVITLHADDGLDEVSISASTTLFEYDASDQNPVPRSHEVGPERHDLDRASISTLEGGTAQQNASILRNILSGEDQGPRRDVALLNAAYALHVSDQYADLDACLEAAAESIDSGAALDALNTLASVSKEAKSE.

5-phospho-alpha-D-ribose 1-diphosphate contacts are provided by residues Gly79, 82-83, Thr87, 89-92, 107-115, and Ser119; these read GD, NIST, and KHGNRSVSS. Position 79 (Gly79) interacts with anthranilate. Ser91 is a binding site for Mg(2+). Asn110 contacts anthranilate. Arg165 lines the anthranilate pocket. Residues Asp224 and Glu225 each coordinate Mg(2+).

The protein belongs to the anthranilate phosphoribosyltransferase family. In terms of assembly, homodimer. Requires Mg(2+) as cofactor.

It carries out the reaction N-(5-phospho-beta-D-ribosyl)anthranilate + diphosphate = 5-phospho-alpha-D-ribose 1-diphosphate + anthranilate. Its pathway is amino-acid biosynthesis; L-tryptophan biosynthesis; L-tryptophan from chorismate: step 2/5. In terms of biological role, catalyzes the transfer of the phosphoribosyl group of 5-phosphorylribose-1-pyrophosphate (PRPP) to anthranilate to yield N-(5'-phosphoribosyl)-anthranilate (PRA). In Salinibacter ruber (strain DSM 13855 / M31), this protein is Anthranilate phosphoribosyltransferase.